We begin with the raw amino-acid sequence, 242 residues long: UPF0309 protein BMEA_B0892 (242 aa).

The SIS domain maps to 30 to 214 (AADLIAAAAR…ARLVGEGDAP (185 aa)).

This sequence belongs to the UPF0309 family.

The chain is UPF0309 protein BMEA_B0892 from Brucella melitensis biotype 2 (strain ATCC 23457).